The chain runs to 176 residues: Large ribosomal subunit protein uL6 (176 aa).

This sequence belongs to the universal ribosomal protein uL6 family. Part of the 50S ribosomal subunit.

Its function is as follows. This protein binds to the 23S rRNA, and is important in its secondary structure. It is located near the subunit interface in the base of the L7/L12 stalk, and near the tRNA binding site of the peptidyltransferase center. The chain is Large ribosomal subunit protein uL6 from Lactobacillus helveticus (strain DPC 4571).